An 85-amino-acid chain; its full sequence is Inhibitor of dGTPase (85 aa).

Interacts with host dGTPase/dgt.

In terms of biological role, plays a role in increasing the intracellular pool of dGTP. Interacts with and inhibits host dGTPase/dgt. The complex made of the host dGTPase and gene 1.2 protein creates a GTP-binding site of high affinity. Subsequent binding of GTP to the enzyme-inhibitor complex inhibits its dissociation. In Escherichia coli (Bacteriophage T7), this protein is Inhibitor of dGTPase.